Consider the following 862-residue polypeptide: MAQPGPASQPDVSLQQRVAELEKINAEFLRAQQQLEQEFNQKRAKFKELYLAKEEDLKRQNAVLQAAQDDLGHLRTQLWEAQAEMENIKAIATVSENTKQEAIDEVKRQWREEVASLQAVMKETVRDYEHQFHLRLEQERTQWAQYRESAEREIADLRRRLSEGQEEENLENEMKKAQEDAEKLRSVVMPMEKEIAALKDKLTEAEDKIKELEASKVKELNHYLEAEKSCRTDLEMYVAVLNTQKSVLQEDAEKLRKELHEVCHLLEQERQQHNQLKHTWQKANDQFLESQRLLMRDMQRMEIVLTSEQLRQVEELKKKDQEDDEQQRLNKRKDHKKADVEEEIKIPVVCALTQEESSAQLSNEEEHLDSTRGSVHSLDAGLLLPSGDPFSKSDNDMFKDGLRRAQSTDSLGTSGSLQSKALGYNYKAKSAGNLDESDFGPLVGADSVSENFDTASLGSLQMPSGFMLTKDQERAIKAMTPEQEETASLLSSVTQGMESAYVSPSGYRLVSETEWNLLQKEVHNAGNKLGRRCDMCSNYEKQLQGIQIQEAETRDQVKKLQLMLRQANDQLEKTMKDKQELEDFIKQSSEDSSHQISALVLRAQASEILLEELQQGLSQAKRDVQEQMAVLMQSREQVSEELVRLQKDNDSLQGKHSLHVSLQQAEDFILPDTTEALRELVLKYREDIINVRTAADHVEEKLKAEILFLKEQIQAEQCLKENLEETLQLEIENCKEEIASISSLKAELERIKVEKGQLESTLREKSQQLESLQEIKISLEEQLKKETAAKATVEQLMFEEKNKAQRLQTELDVSEQVQRDFVKLSQTLQVQLERIRQADSLERIRAILNDTKLTDINQLPET.

At alanine 2 the chain carries N-acetylalanine. Positions 11–345 form a coiled coil; the sequence is DVSLQQRVAE…KKADVEEEIK (335 aa). Lysine 282 carries the post-translational modification N6-acetyllysine. Positions 315–338 are disordered; that stretch reads ELKKKDQEDDEQQRLNKRKDHKKA. 3 positions are modified to phosphoserine: serine 374, serine 377, and serine 407. Threonine 408 carries the phosphothreonine modification. Serine 410 carries the post-translational modification Phosphoserine. Positions 435 to 447 are interaction with AP1G1, AP1G2, GGA1, GGA2 and GGA3; sequence DESDFGPLVGADS. A coiled-coil region spans residues 534–816; the sequence is DMCSNYEKQL…LQTELDVSEQ (283 aa).

Belongs to the rabaptin family. Homodimer when bound to RAB5A. Heterodimer with RABGEF1. The heterodimer binds RAB4A and RAB5A that have been activated by GTP-binding. Interacts with TSC2. Interacts with GGA1 (via GAE domain), GGA2 (via GAE domain) and GGA3 (via GAE domain). Interacts with AP1G1 (via GAE domain). Interacts with AP1G2 (via GAE domain). Interacts with ECPAS. Interacts with KCNH1. Interacts with PKD1 (via C-terminal domain) and GGA1; the interactions recruit PKD1:PKD2 complex to GGA1 and ARL3 at trans-Golgi network. Proteolytic cleavage by caspases in apoptotic cells causes loss of endosome fusion activity.

The protein resides in the cytoplasm. It is found in the early endosome. The protein localises to the recycling endosome. Its subcellular location is the cytoplasmic vesicle. Its function is as follows. Rab effector protein acting as linker between gamma-adaptin, RAB4A and RAB5A. Involved in endocytic membrane fusion and membrane trafficking of recycling endosomes. Involved in KCNH1 channels trafficking to and from the cell membrane. Stimulates RABGEF1 mediated nucleotide exchange on RAB5A. Mediates the traffic of PKD1:PKD2 complex from the endoplasmic reticulum through the Golgi to the cilium. The protein is Rab GTPase-binding effector protein 1 (RABEP1) of Homo sapiens (Human).